We begin with the raw amino-acid sequence, 317 residues long: Low affinity immunoglobulin gamma Fc region receptor II-a (317 aa).

Positions 1–33 are cleaved as a signal peptide; sequence MTMETQMSQNVCPRNLWLLQPLTVLLLLASADS. The Extracellular portion of the chain corresponds to 34–217; sequence QAAAPPKAVL…PSMGSSSPMG (184 aa). 2 consecutive Ig-like C2-type domains span residues 39 to 118 and 122 to 204; these read PKAV…VHLT and EWLV…VTIT. 2 cysteine pairs are disulfide-bonded: Cys-62/Cys-104 and Cys-143/Cys-187. N-linked (GlcNAc...) asparagine glycans are attached at residues Asn-97 and Asn-178. Residues 218–240 form a helical membrane-spanning segment; that stretch reads IIVAVVIATAVAAIVAAVVALIY. The Cytoplasmic segment spans residues 241 to 317; it reads CRKKRISANS…PPNDHVNSNN (77 aa). Tyr-288 and Tyr-304 each carry phosphotyrosine; by SRC-type Tyr-kinases. A disordered region spans residues 292 to 317; sequence NPRAPTDDDKNIYLTLPPNDHVNSNN.

In terms of assembly, interacts with IGHG1. Interacts with INPP5D/SHIP1 and INPPL1/SHIP2, regulating its function. Interacts with APCS and FGR. Interacts with HCK. Phosphorylated by SRC-type Tyr-kinases such as LYN, BLK, FYN, HCK and SYK. Found on monocytes, neutrophils and eosinophil platelets.

The protein resides in the cell membrane. In terms of biological role, binds to the Fc region of immunoglobulins gamma. Low affinity receptor. By binding to IgG it initiates cellular responses against pathogens and soluble antigens. Promotes phagocytosis of opsonized antigens. The polypeptide is Low affinity immunoglobulin gamma Fc region receptor II-a (FCGR2A) (Homo sapiens (Human)).